The following is a 319-amino-acid chain: Ribose-phosphate pyrophosphokinase (319 aa).

ATP contacts are provided by residues 41–43 and 100–101; these read NGE and RQ. Mg(2+) is bound by residues His-134 and Asp-175. The active site involves Lys-198. Residues Arg-200, Asp-224, and 228 to 232 each bind D-ribose 5-phosphate; that span reads DTAGS.

The protein belongs to the ribose-phosphate pyrophosphokinase family. Class I subfamily. As to quaternary structure, homohexamer. Mg(2+) is required as a cofactor.

It is found in the cytoplasm. The enzyme catalyses D-ribose 5-phosphate + ATP = 5-phospho-alpha-D-ribose 1-diphosphate + AMP + H(+). It participates in metabolic intermediate biosynthesis; 5-phospho-alpha-D-ribose 1-diphosphate biosynthesis; 5-phospho-alpha-D-ribose 1-diphosphate from D-ribose 5-phosphate (route I): step 1/1. Its function is as follows. Involved in the biosynthesis of the central metabolite phospho-alpha-D-ribosyl-1-pyrophosphate (PRPP) via the transfer of pyrophosphoryl group from ATP to 1-hydroxyl of ribose-5-phosphate (Rib-5-P). The chain is Ribose-phosphate pyrophosphokinase from Clostridium acetobutylicum (strain ATCC 824 / DSM 792 / JCM 1419 / IAM 19013 / LMG 5710 / NBRC 13948 / NRRL B-527 / VKM B-1787 / 2291 / W).